We begin with the raw amino-acid sequence, 477 residues long: Ribulose bisphosphate carboxylase large chain (477 aa).

A propeptide spanning residues 1-2 (MS) is cleaved from the precursor. The residue at position 3 (proline 3) is an N-acetylproline. Lysine 14 is subject to N6,N6,N6-trimethyllysine. Residues asparagine 123 and threonine 173 each contribute to the substrate site. The Proton acceptor role is filled by lysine 175. Residue lysine 177 coordinates substrate. Residues lysine 201, aspartate 203, and glutamate 204 each contribute to the Mg(2+) site. The residue at position 201 (lysine 201) is an N6-carboxylysine. Histidine 294 acts as the Proton acceptor in catalysis. Substrate contacts are provided by arginine 295, histidine 327, and serine 379.

The protein belongs to the RuBisCO large chain family. Type I subfamily. As to quaternary structure, heterohexadecamer of 8 large chains and 8 small chains; disulfide-linked. The disulfide link is formed within the large subunit homodimers. Mg(2+) is required as a cofactor. Post-translationally, the disulfide bond which can form in the large chain dimeric partners within the hexadecamer appears to be associated with oxidative stress and protein turnover.

The protein localises to the plastid. It is found in the chloroplast. It catalyses the reaction 2 (2R)-3-phosphoglycerate + 2 H(+) = D-ribulose 1,5-bisphosphate + CO2 + H2O. It carries out the reaction D-ribulose 1,5-bisphosphate + O2 = 2-phosphoglycolate + (2R)-3-phosphoglycerate + 2 H(+). Functionally, ruBisCO catalyzes two reactions: the carboxylation of D-ribulose 1,5-bisphosphate, the primary event in carbon dioxide fixation, as well as the oxidative fragmentation of the pentose substrate in the photorespiration process. Both reactions occur simultaneously and in competition at the same active site. The sequence is that of Ribulose bisphosphate carboxylase large chain from Agrostis stolonifera (Creeping bentgrass).